We begin with the raw amino-acid sequence, 204 residues long: Protein Mis18-alpha (204 aa).

Phosphoserine is present on residues Ser-13, Ser-16, and Ser-17. Residues 51-149 (PLVFLCARCR…SVEAVESYTL (99 aa)) form the Mis18 domain. 4 residues coordinate Zn(2+): Cys-56, Cys-59, Cys-112, and Cys-115. A Glycyl lysine isopeptide (Lys-Gly) (interchain with G-Cter in SUMO2) cross-link involves residue Lys-133. Position 204 is a phosphoserine (Ser-204).

It belongs to the mis18 family. Homodimer, and heterodimer with OIP5/MIS18B. Identified in a complex containing MIS18A, OIP5/MIS18B, MIS18BP1, RBBP7 and RBBP4.

It is found in the nucleus. The protein resides in the chromosome. The protein localises to the centromere. In terms of biological role, required for recruitment of CENPA to centromeres and normal chromosome segregation during mitosis. The chain is Protein Mis18-alpha (Mis18a) from Mus musculus (Mouse).